The chain runs to 184 residues: Ribosome maturation factor RimM (184 aa).

The PRC barrel domain maps to 104 to 184 (SEDEFYWREL…RIEVDWDPGF (81 aa)).

This sequence belongs to the RimM family. Binds ribosomal protein uS19.

It localises to the cytoplasm. An accessory protein needed during the final step in the assembly of 30S ribosomal subunit, possibly for assembly of the head region. Essential for efficient processing of 16S rRNA. May be needed both before and after RbfA during the maturation of 16S rRNA. It has affinity for free ribosomal 30S subunits but not for 70S ribosomes. This Vibrio atlanticus (strain LGP32) (Vibrio splendidus (strain Mel32)) protein is Ribosome maturation factor RimM.